The sequence spans 493 residues: Glutamate--tRNA ligase (493 aa).

The 'HIGH' region signature appears at 9 to 19 (PSPTGFVHIGS). Residues 258-262 (KLSKR) carry the 'KMSKS' region motif. Residue Lys261 coordinates ATP.

Belongs to the class-I aminoacyl-tRNA synthetase family. Glutamate--tRNA ligase type 1 subfamily. In terms of assembly, monomer.

Its subcellular location is the cytoplasm. The enzyme catalyses tRNA(Glu) + L-glutamate + ATP = L-glutamyl-tRNA(Glu) + AMP + diphosphate. In terms of biological role, catalyzes the attachment of glutamate to tRNA(Glu) in a two-step reaction: glutamate is first activated by ATP to form Glu-AMP and then transferred to the acceptor end of tRNA(Glu). This Clostridioides difficile (strain 630) (Peptoclostridium difficile) protein is Glutamate--tRNA ligase.